The primary structure comprises 227 residues: Flagellar transcriptional regulator FtcR (227 aa).

The Response regulatory domain occupies 1–116 (MIVVVDDRDM…EILARINAIR (116 aa)). Positions 127-226 (ADGTQLGPIR…KRFLGYCINI (100 aa)) form a DNA-binding region, ompR/PhoB-type.

Required for transcription of flagellar genes. This is Flagellar transcriptional regulator FtcR (ftcR) from Brucella abortus (strain 2308).